Here is a 105-residue protein sequence, read N- to C-terminus: Ketoisovalerate oxidoreductase subunit VorD (105 aa).

2 consecutive 4Fe-4S ferredoxin-type domains span residues 44-73 (FMPVIDESKCVKCYICWKYCPEPAIYIKED) and 74-103 (GFVAIDYDYCKGCGICANECPTKAITMVRE). 8 residues coordinate [4Fe-4S] cluster: Cys-53, Cys-56, Cys-59, Cys-63, Cys-83, Cys-86, Cys-89, and Cys-93.

In terms of assembly, heterotetramer of one alpha, one beta, one delta and one gamma chain. [4Fe-4S] cluster is required as a cofactor.

The enzyme catalyses 3-methyl-2-oxobutanoate + 2 oxidized [2Fe-2S]-[ferredoxin] + CoA = 2-methylpropanoyl-CoA + 2 reduced [2Fe-2S]-[ferredoxin] + CO2 + H(+). The sequence is that of Ketoisovalerate oxidoreductase subunit VorD (vorD) from Pyrococcus horikoshii (strain ATCC 700860 / DSM 12428 / JCM 9974 / NBRC 100139 / OT-3).